The chain runs to 248 residues: tRNA (guanine-N(1)-)-methyltransferase (248 aa).

Residues G117 and I137 to L142 contribute to the S-adenosyl-L-methionine site.

It belongs to the RNA methyltransferase TrmD family. As to quaternary structure, homodimer.

The protein resides in the cytoplasm. It carries out the reaction guanosine(37) in tRNA + S-adenosyl-L-methionine = N(1)-methylguanosine(37) in tRNA + S-adenosyl-L-homocysteine + H(+). Functionally, specifically methylates guanosine-37 in various tRNAs. This Polynucleobacter necessarius subsp. necessarius (strain STIR1) protein is tRNA (guanine-N(1)-)-methyltransferase.